Here is a 376-residue protein sequence, read N- to C-terminus: Putative type I restriction enzyme MpnIIP endonuclease subunit N-terminal part (376 aa).

Functionally, the N-terminal section of a putative type I restriction enzyme that if reconstituted might recognize 5'-GAN(7)TAY-3' and cleave a random distance away. Subunit R is required for both nuclease and ATPase activities, but not for modification. This Mycoplasma pneumoniae (strain ATCC 29342 / M129 / Subtype 1) (Mycoplasmoides pneumoniae) protein is Putative type I restriction enzyme MpnIIP endonuclease subunit N-terminal part.